A 488-amino-acid polypeptide reads, in one-letter code: Tyrosine-protein kinase Srms (488 aa).

Residues Pro51–Pro112 enclose the SH3 domain. In terms of domain architecture, SH2 spans Trp120–Cys212. Positions Phe230–Pro488 constitute a Protein kinase domain. Residues Leu236 to Val244 and Lys258 each bind ATP. Asp350 functions as the Proton acceptor in the catalytic mechanism. A Phosphotyrosine; by autocatalysis modification is found at Tyr380.

It belongs to the protein kinase superfamily. Tyr protein kinase family. SRC subfamily. As to quaternary structure, interacts (via the SH2 and SH3 domains) with DOK1. Interacts with KHDRBS1/SAM68 and VIM. Highly expressed in most breast cancers (at protein level).

The protein localises to the cytoplasm. The catalysed reaction is L-tyrosyl-[protein] + ATP = O-phospho-L-tyrosyl-[protein] + ADP + H(+). Its function is as follows. Non-receptor tyrosine-protein kinase which phosphorylates DOK1 on tyrosine residues. Also phosphorylates KHDRBS1/SAM68 and VIM on tyrosine residues. Phosphorylation of KHDRBS1 is EGF-dependent. Phosphorylates OTUB1, promoting deubiquitination of RPTOR. This Homo sapiens (Human) protein is Tyrosine-protein kinase Srms (SRMS).